Consider the following 36-residue polypeptide: Peptide POLARIS (36 aa).

Belongs to the POLARIS peptide family. As to expression, mostly expressed in the embryonic root from the heart stage and in the seedling primary and lateral root tips, especially in the columella initials and lateral root cap. Also detectable in aerial parts of the seedling, sepals and leaves, principally in vascular tissues of the lamina and petiole.

In terms of biological role, required for correct root growth and vascular development, probably by modulating both cell division rate in meristems and cell elongation in roots. Negative regulator of the ethylene signaling pathway that modulates microtubule cytoskeleton dynamics and auxin transport and homeostasis, and possibly cytokinin signaling, thus influencing root growth and lateral root development. The polypeptide is Peptide POLARIS (PLS) (Arabidopsis thaliana (Mouse-ear cress)).